The sequence spans 191 residues: MRRGRLIVVSGPSGAGKSTLIRAALDAVPQLAYSVSATTRAPRPGEVNGRDYIFLSREEFERWIREGRFLEWAEYSGNLYGTPAHRVEEYLESGLSVILEIELQGARKVRRKRPDAVMIFVRAPSLEETRRRLEGRATESEDAVQRRLATAVEEVAARDEFDCEVVNDDYERAREEMIEIMRRIVAGGDPC.

Residues G4 to R182 form the Guanylate kinase-like domain. Residue G11–S18 participates in ATP binding.

It belongs to the guanylate kinase family.

It is found in the cytoplasm. The catalysed reaction is GMP + ATP = GDP + ADP. Essential for recycling GMP and indirectly, cGMP. The protein is Guanylate kinase of Rubrobacter xylanophilus (strain DSM 9941 / JCM 11954 / NBRC 16129 / PRD-1).